The chain runs to 80 residues: uncharacterized protein (80 aa).

It belongs to the BolA/IbaG family.

This is an uncharacterized protein from Buchnera aphidicola subsp. Acyrthosiphon pisum (strain APS) (Acyrthosiphon pisum symbiotic bacterium).